The chain runs to 210 residues: Na(+)-translocating NADH-quinone reductase subunit D (210 aa).

Helical transmembrane passes span 9–29, 42–62, 72–92, 103–123, 131–151, and 178–198; these read SVLI…LGVC, LVMT…ISLI, IIVQ…VLQA, VFVG…AFAM, FMDG…VGFV, and NGLL…IWII.

The protein belongs to the NqrDE/RnfAE family. Composed of six subunits; NqrA, NqrB, NqrC, NqrD, NqrE and NqrF.

Its subcellular location is the cell inner membrane. The enzyme catalyses a ubiquinone + n Na(+)(in) + NADH + H(+) = a ubiquinol + n Na(+)(out) + NAD(+). Functionally, NQR complex catalyzes the reduction of ubiquinone-1 to ubiquinol by two successive reactions, coupled with the transport of Na(+) ions from the cytoplasm to the periplasm. NqrA to NqrE are probably involved in the second step, the conversion of ubisemiquinone to ubiquinol. In Shewanella piezotolerans (strain WP3 / JCM 13877), this protein is Na(+)-translocating NADH-quinone reductase subunit D.